Reading from the N-terminus, the 248-residue chain is tRNA pseudouridine synthase A (248 aa).

The Nucleophile role is filled by D53. Y111 contacts substrate.

This sequence belongs to the tRNA pseudouridine synthase TruA family. As to quaternary structure, homodimer.

The catalysed reaction is uridine(38/39/40) in tRNA = pseudouridine(38/39/40) in tRNA. In terms of biological role, formation of pseudouridine at positions 38, 39 and 40 in the anticodon stem and loop of transfer RNAs. The protein is tRNA pseudouridine synthase A of Listeria monocytogenes serotype 4b (strain CLIP80459).